Reading from the N-terminus, the 503-residue chain is Glycerol kinase (503 aa).

An ADP-binding site is contributed by Thr14. Residues Thr14, Thr15, and Ser16 each contribute to the ATP site. Thr14 is a sn-glycerol 3-phosphate binding site. Arg18 provides a ligand contact to ADP. Residues Arg84, Glu85, Tyr136, and Asp246 each contribute to the sn-glycerol 3-phosphate site. The glycerol site is built by Arg84, Glu85, Tyr136, Asp246, and Gln247. 2 residues coordinate ADP: Thr268 and Gly311. ATP is bound by residues Thr268, Gly311, Gln315, and Gly412. ADP is bound by residues Gly412 and Asn416.

Belongs to the FGGY kinase family. Homotetramer and homodimer (in equilibrium). Heterodimer with EIIA-Glc. Binds 1 zinc ion per glycerol kinase EIIA-Glc dimer. The zinc ion is important for dimerization.

It carries out the reaction glycerol + ATP = sn-glycerol 3-phosphate + ADP + H(+). The protein operates within polyol metabolism; glycerol degradation via glycerol kinase pathway; sn-glycerol 3-phosphate from glycerol: step 1/1. Activity of this regulatory enzyme is affected by several metabolites. Allosterically and non-competitively inhibited by fructose 1,6-bisphosphate (FBP) and unphosphorylated phosphocarrier protein EIIA-Glc (III-Glc), an integral component of the bacterial phosphotransferase (PTS) system. Functionally, key enzyme in the regulation of glycerol uptake and metabolism. Catalyzes the phosphorylation of glycerol to yield sn-glycerol 3-phosphate. This Klebsiella pneumoniae subsp. pneumoniae (strain ATCC 700721 / MGH 78578) protein is Glycerol kinase.